A 306-amino-acid chain; its full sequence is MSIRIVPKEQLGKEPSEKSISFIPPVLFPNLKNLYQRRAERFQALAKDNPFADYLEFAAEIALAQEKALHDNPLELDLTPLLSQQTGIAPLDKKTFKRSKHWHALLASIIAELQSVVPESAKIALENLSKASETELEEMATALLNDEYSKVSADKSVFIWAALSLYWAQLAANIPGKAKTEYGENRQFCPVCNSMPVSSMVQIGTTQGLRYLHCNLCETEWHVVRIKCTNCELTGKLNYWSLDSENAPVKAESCGDCGSYLKILYQEKDANVDAVADDLASLILDAKMEEEGFARSSINPLLFPNE.

The protein belongs to the FdhE family.

Its subcellular location is the cytoplasm. Its function is as follows. Necessary for formate dehydrogenase activity. The protein is Protein FdhE homolog of Proteus mirabilis (strain HI4320).